Here is a 509-residue protein sequence, read N- to C-terminus: Cobyric acid synthase (509 aa).

One can recognise a GATase cobBQ-type domain in the interval 262-459; sequence EIKVGIIKLP…IHGIFENDSW (198 aa). Cysteine 343 serves as the catalytic Nucleophile. Residue histidine 451 is part of the active site.

Belongs to the CobB/CobQ family. CobQ subfamily.

Its pathway is cofactor biosynthesis; adenosylcobalamin biosynthesis. Catalyzes amidations at positions B, D, E, and G on adenosylcobyrinic A,C-diamide. NH(2) groups are provided by glutamine, and one molecule of ATP is hydrogenolyzed for each amidation. The chain is Cobyric acid synthase from Prochlorococcus marinus (strain MIT 9215).